The primary structure comprises 349 residues: 4-hydroxythreonine-4-phosphate dehydrogenase (349 aa).

Substrate contacts are provided by H141 and T142. 3 residues coordinate a divalent metal cation: H176, H221, and H276. Residues K284, N293, and R302 each contribute to the substrate site.

The protein belongs to the PdxA family. Homodimer. It depends on Zn(2+) as a cofactor. Mg(2+) serves as cofactor. Requires Co(2+) as cofactor.

The protein resides in the cytoplasm. The enzyme catalyses 4-(phosphooxy)-L-threonine + NAD(+) = 3-amino-2-oxopropyl phosphate + CO2 + NADH. It participates in cofactor biosynthesis; pyridoxine 5'-phosphate biosynthesis; pyridoxine 5'-phosphate from D-erythrose 4-phosphate: step 4/5. Functionally, catalyzes the NAD(P)-dependent oxidation of 4-(phosphooxy)-L-threonine (HTP) into 2-amino-3-oxo-4-(phosphooxy)butyric acid which spontaneously decarboxylates to form 3-amino-2-oxopropyl phosphate (AHAP). This chain is 4-hydroxythreonine-4-phosphate dehydrogenase, found in Methylorubrum extorquens (strain PA1) (Methylobacterium extorquens).